The chain runs to 184 residues: Elongation factor P (184 aa).

This sequence belongs to the elongation factor P family.

Its subcellular location is the cytoplasm. The protein operates within protein biosynthesis; polypeptide chain elongation. Involved in peptide bond synthesis. Stimulates efficient translation and peptide-bond synthesis on native or reconstituted 70S ribosomes in vitro. Probably functions indirectly by altering the affinity of the ribosome for aminoacyl-tRNA, thus increasing their reactivity as acceptors for peptidyl transferase. This chain is Elongation factor P, found in Leptothrix cholodnii (strain ATCC 51168 / LMG 8142 / SP-6) (Leptothrix discophora (strain SP-6)).